The following is a 259-amino-acid chain: Short-chain dehydrogenase reductase 5 (259 aa).

12–36 provides a ligand contact to NAD(+); it reads IITGGASGIGAEAARLFTDHGAKVV. A substrate-binding site is contributed by serine 144. Tyrosine 157 (proton acceptor) is an active-site residue.

Belongs to the short-chain dehydrogenases/reductases (SDR) family.

The protein is Short-chain dehydrogenase reductase 5 (SDR5) of Arabidopsis thaliana (Mouse-ear cress).